Here is a 570-residue protein sequence, read N- to C-terminus: Glycine--tRNA ligase (570 aa).

Substrate is bound by residues R95 and E159. Residues 191–193, 201–206, 312–313, and 426–429 each bind ATP; these read RNE, IRLREF, EV, and GLDR. 206-210 serves as a coordination point for substrate; that stretch reads FNQAE. 422 to 426 is a substrate binding site; it reads EPSFG.

It belongs to the class-II aminoacyl-tRNA synthetase family.

It localises to the cytoplasm. It catalyses the reaction tRNA(Gly) + glycine + ATP = glycyl-tRNA(Gly) + AMP + diphosphate. Catalyzes the attachment of glycine to tRNA(Gly). The polypeptide is Glycine--tRNA ligase (Archaeoglobus fulgidus (strain ATCC 49558 / DSM 4304 / JCM 9628 / NBRC 100126 / VC-16)).